The sequence spans 317 residues: MNKWQELTIEVNREVEEAASNILIESGSQGVTIDDSADYLENADRFGELYPEVEQVETVKITAYYPESADIEAITKQVNDRLDELTDFGLETGDIHLVTQELVEEDWAENWKKYYEPARITHDLTIVPSWTDYEASVGEKIIKLDPGMAFGTGTHPTTKMSLFALEQVLRGGETVIDVGTGSGVLSIASSLLGAKEIYAYDLDDVAVRVAQENIDMNPGMENIHVATGDLLKGVTQEADVIVANILADILIHLMEDAYRLVKDEGYLIMSGIISEKWDMVRELAEKAGFLLETHMVQGEWNACVFKKTDDISGVIGG.

Positions 158, 179, 201, and 244 each coordinate S-adenosyl-L-methionine.

The protein belongs to the methyltransferase superfamily. PrmA family.

Its subcellular location is the cytoplasm. The catalysed reaction is L-lysyl-[protein] + 3 S-adenosyl-L-methionine = N(6),N(6),N(6)-trimethyl-L-lysyl-[protein] + 3 S-adenosyl-L-homocysteine + 3 H(+). In terms of biological role, methylates ribosomal protein L11. This chain is Ribosomal protein L11 methyltransferase, found in Streptococcus thermophilus (strain CNRZ 1066).